A 659-amino-acid chain; its full sequence is Centrosomal protein of 76 kDa (659 aa).

Phosphoserine is present on residues S75 and S83.

The protein belongs to the CEP76 family. In terms of assembly, interacts with CCP110 and CEP97.

The protein resides in the cytoplasm. Its subcellular location is the cytoskeleton. The protein localises to the microtubule organizing center. It localises to the centrosome. It is found in the centriole. Centrosomal protein involved in regulation of centriole duplication. Required to limit centriole duplication to once per cell cycle by preventing centriole reduplication. The chain is Centrosomal protein of 76 kDa (CEP76) from Homo sapiens (Human).